A 517-amino-acid polypeptide reads, in one-letter code: L-amino-acid oxidase (517 aa).

A signal peptide spans 1–18; that stretch reads MNVFFMFSLLFLAALESC. Residues cysteine 29 and cysteine 192 are joined by a disulfide bond. FAD contacts are provided by residues 62 to 63, 82 to 83, arginine 90, and 106 to 109; these read MA, EA, and GPMR. Residue arginine 109 participates in substrate binding. The N-linked (GlcNAc...) asparagine glycan is linked to asparagine 191. Residue valine 280 participates in FAD binding. The cysteines at positions 350 and 431 are disulfide-linked. An N-linked (GlcNAc...) asparagine glycan is attached at asparagine 380. Tyrosine 391 contacts substrate. Residues glutamate 476 and 483-488 each bind FAD; that span reads GWLDST. Residue 483–484 coordinates substrate; sequence GW.

This sequence belongs to the flavin monoamine oxidase family. FIG1 subfamily. In terms of assembly, homodimer; non-covalently linked. Requires FAD as cofactor. N-glycosylated. As to expression, expressed by the venom gland.

It is found in the secreted. It carries out the reaction an L-alpha-amino acid + O2 + H2O = a 2-oxocarboxylate + H2O2 + NH4(+). Catalyzes an oxidative deamination of predominantly hydrophobic and aromatic L-amino acids, thus producing hydrogen peroxide that may contribute to the diverse toxic effects of this enzyme. Exhibits diverse biological activities, such as hemorrhage, hemolysis, edema, apoptosis of vascular endothelial cells or tumor cell lines, antibacterial and antiparasitic activities, as well as regulation of platelet aggregation. Effects of snake L-amino oxidases on platelets are controversial, since they either induce aggregation or inhibit agonist-induced aggregation. These different effects are probably due to different experimental conditions. The chain is L-amino-acid oxidase from Notechis scutatus scutatus (Mainland tiger snake).